Consider the following 455-residue polypeptide: Protein 60A (455 aa).

The signal sequence occupies residues 1 to 36 (MSGLRNTSEAVAVLASLGLGMVLLMFVATTPPAVEA). Residues 37–335 (TQSGIYIDNG…SASHPRKRKK (299 aa)) constitute a propeptide that is removed on maturation. Residues 108-118 (GLSDQDEDDDY) show a composition bias toward acidic residues. A disordered region spans residues 108–138 (GLSDQDEDDDYERGHRSRRSADLEEDEGEQQ). Asn-238 and Asn-250 each carry an N-linked (GlcNAc...) asparagine glycan. The disordered stretch occupies residues 316–345 (AHSSHHRSKRSASHPRKRKKSVSPNNVPLL). A compositionally biased stretch (basic residues) spans 318–336 (SSHHRSKRSASHPRKRKKS). 3 disulfide bridges follow: Cys-354–Cys-420, Cys-383–Cys-452, and Cys-387–Cys-454. N-linked (GlcNAc...) asparagine glycosylation occurs at Asn-396.

Belongs to the TGF-beta family. As to quaternary structure, homodimer; disulfide-linked. Interacts with nord and dpp. As to expression, expressed in cells of the developing foregut and hindgut during germ band retraction and later embryonic stages. Expressed in the wing disk, mainly in the posterior compartment in the pteropleural and medial regions extending into the progenitors of the scutellum. High levels are found within the posterior and anterior compartments of the wing pouch and low levels in the hinge region. In the eye/antennal disk, expression is highest anterior to the morphogenetic furrow and in the medial regions with lower levels of expression posterior to the morphogenetic furrow. Expressed throughout the posterior compartment of the leg imaginal disks and within the ventral anterior compartment.

It localises to the secreted. Functionally, required for the growth of imaginal tissues and for patterning of the adult wing. This chain is Protein 60A (gbb), found in Drosophila melanogaster (Fruit fly).